Here is a 389-residue protein sequence, read N- to C-terminus: Homoserine O-acetyltransferase (389 aa).

The segment at 1–21 is disordered; that stretch reads MAALRAGKTNNEADQPSSPVL. The span at 8-18 shows a compositional bias: polar residues; that stretch reads KTNNEADQPSS. Residues 56-366 form the AB hydrolase-1 domain; it reads NAILVCHALT…DRGHDAFLLD (311 aa). The active-site Nucleophile is the S161. R231 serves as a coordination point for substrate. Residues D327 and H360 contribute to the active site. D361 contacts substrate.

It belongs to the AB hydrolase superfamily. MetX family. Homodimer.

It is found in the cytoplasm. The catalysed reaction is L-homoserine + acetyl-CoA = O-acetyl-L-homoserine + CoA. It functions in the pathway amino-acid biosynthesis; L-methionine biosynthesis via de novo pathway; O-acetyl-L-homoserine from L-homoserine: step 1/1. Functionally, transfers an acetyl group from acetyl-CoA to L-homoserine, forming acetyl-L-homoserine. This Mesorhizobium japonicum (strain LMG 29417 / CECT 9101 / MAFF 303099) (Mesorhizobium loti (strain MAFF 303099)) protein is Homoserine O-acetyltransferase.